The sequence spans 344 residues: UDP-N-acetylenolpyruvoylglucosamine reductase (344 aa).

The FAD-binding PCMH-type domain maps to 15 to 185 (LPACANQIIE…ISVGLKLAKA (171 aa)). The active site involves Arg161. The active-site Proton donor is the Ser231. Residue Glu327 is part of the active site.

Belongs to the MurB family. FAD serves as cofactor.

The protein resides in the cytoplasm. The enzyme catalyses UDP-N-acetyl-alpha-D-muramate + NADP(+) = UDP-N-acetyl-3-O-(1-carboxyvinyl)-alpha-D-glucosamine + NADPH + H(+). The protein operates within cell wall biogenesis; peptidoglycan biosynthesis. Functionally, cell wall formation. The sequence is that of UDP-N-acetylenolpyruvoylglucosamine reductase from Haemophilus ducreyi (strain 35000HP / ATCC 700724).